Reading from the N-terminus, the 553-residue chain is MLGMGVFKQLIKELYEWLLHSMDMATQHLVAIVLKISVVKYLIKEFHDRFIYFIDLLAQHFIIVALSGFLVLVFGVLIGVFAFYNSKARAFLLPVVNFLYTIPSLALFALFIPVIGVGLKNALLVLVLYGLLPIVYSTYNALKEVREEVIKAAIGLGCNPKELFFRVHFLLAIPQILAGLRIAVVMLVAMAGIGALIGAGGLGQAIFRGLNTQNTTLLVAGSLIIALFSVLADKFVSVFQHENALQRLFSQNATQKQKRRVYTNLAVFLFLLLASALWLIPRNAIEEKPLVVATKPSSEQYILGEILSLLLEKHHIPIKRAFGIGGGTMNIHPALIRGDFDLYMEYTGTAWVNTLKNPLTQKVDFETIKKRYEKEFNLLWVGLLGFNNTYSLAISKEDAQKYAIETFSDLALHSQNFDFGAEFDFFEREDAFKGLMKAYRFHFRSLHEMDINLRYKSFESHKINALDVFTTDAQIKELDLKVLKDDKGFFPNYQAGIVIRKEIIKKYPEALKILEKLDSKINDETMQDLNYQVEVLKKSPKIVAKDFLERLGL.

In terms of domain architecture, ABC transmembrane type-1 spans 57–236; sequence LAQHFIIVAL…LFSVLADKFV (180 aa). The next 6 membrane-spanning stretches (helical) occupy residues 61 to 81, 98 to 118, 122 to 142, 182 to 202, 219 to 239, and 261 to 281; these read FIIV…IGVF, FLYT…IGVG, ALLV…YNAL, IAVV…AGGL, VAGS…VSVF, and VYTN…WLIP. Residues 282–553 are Periplasmic-facing; the sequence is RNAIEEKPLV…AKDFLERLGL (272 aa). Residues 288–549 form an ergothioneine binding domain region; it reads KPLVVATKPS…PKIVAKDFLE (262 aa).

The protein in the N-terminal section; belongs to the binding-protein-dependent transport system permease family. It in the C-terminal section; belongs to the OsmX family. As to quaternary structure, the complex is composed of two ATP-binding proteins (EgtV) and two transmembrane proteins (EgtU).

Its subcellular location is the cell inner membrane. Its function is as follows. Part of the ABC transporter complex EgtUV involved in the uptake of ergothioneine (EGT), a natural low-molecular weight (LMW) thiol antioxidant which protects H.pylori against bleach stress. Responsible for the translocation of the substrate across the membrane. Also contains a C-terminal periplasmic solute-binding domain (SBD) which binds to ergothioneine with low-micromolar affinity. Cannot bind the structurally similar compounds glycine betaine, choline, proline, carnitine or histidine. The polypeptide is Ergothioneine transport permease/ergothioneine binding protein EgtU (Helicobacter pylori (strain G27)).